Consider the following 266-residue polypeptide: L-aspartate dehydrogenase (266 aa).

Alanine 123 and asparagine 189 together coordinate NAD(+). Histidine 219 is an active-site residue.

It belongs to the L-aspartate dehydrogenase family.

The enzyme catalyses L-aspartate + NADP(+) + H2O = oxaloacetate + NH4(+) + NADPH + H(+). It carries out the reaction L-aspartate + NAD(+) + H2O = oxaloacetate + NH4(+) + NADH + H(+). It participates in cofactor biosynthesis; NAD(+) biosynthesis; iminoaspartate from L-aspartate (dehydrogenase route): step 1/1. Functionally, specifically catalyzes the NAD or NADP-dependent dehydrogenation of L-aspartate to iminoaspartate. The protein is L-aspartate dehydrogenase of Cupriavidus necator (strain ATCC 17699 / DSM 428 / KCTC 22496 / NCIMB 10442 / H16 / Stanier 337) (Ralstonia eutropha).